The primary structure comprises 338 residues: Large ribosomal subunit protein uL3 (338 aa).

Residues His-230–Gly-258 are disordered.

The protein belongs to the universal ribosomal protein uL3 family. In terms of assembly, part of the 50S ribosomal subunit. Forms a cluster with proteins L14 and L24e.

Functionally, one of the primary rRNA binding proteins, it binds directly near the 3'-end of the 23S rRNA, where it nucleates assembly of the 50S subunit. This is Large ribosomal subunit protein uL3 from Pyrobaculum aerophilum (strain ATCC 51768 / DSM 7523 / JCM 9630 / CIP 104966 / NBRC 100827 / IM2).